A 180-amino-acid chain; its full sequence is GTP cyclohydrolase 1 (180 aa).

Cys71, His74, and Cys142 together coordinate Zn(2+).

Belongs to the GTP cyclohydrolase I family. Toroid-shaped homodecamer, composed of two pentamers of five dimers.

The catalysed reaction is GTP + H2O = 7,8-dihydroneopterin 3'-triphosphate + formate + H(+). It functions in the pathway cofactor biosynthesis; 7,8-dihydroneopterin triphosphate biosynthesis; 7,8-dihydroneopterin triphosphate from GTP: step 1/1. The sequence is that of GTP cyclohydrolase 1 (folE) from Helicobacter pylori (strain J99 / ATCC 700824) (Campylobacter pylori J99).